The chain runs to 780 residues: Neutral ceramidase (780 aa).

The Cytoplasmic segment spans residues methionine 1–phenylalanine 12. The helical; Signal-anchor for type II membrane protein transmembrane segment at leucine 13–isoleucine 33 threads the bilayer. Topologically, residues threonine 34–isoleucine 780 are lumenal. The segment at histidine 47–threonine 90 is disordered. Over residues alanine 57–serine 85 the composition is skewed to low complexity. Threonine 62 carries O-linked (GalNAc...) threonine glycosylation. Serine 67 carries O-linked (GalNAc...) serine glycosylation. Residues threonine 68 and threonine 70 are each glycosylated (O-linked (GalNAc...) threonine). O-linked (GalNAc...) serine glycosylation is present at serine 73. Residues threonine 74 and threonine 76 are each glycosylated (O-linked (GalNAc...) threonine). Serine 78 and serine 79 each carry an O-linked (GalNAc...) serine glycan. Residues threonine 80, threonine 82, and threonine 84 are each glycosylated (O-linked (GalNAc...) threonine). Residue asparagine 98 is glycosylated (N-linked (GlcNAc...) asparagine). Leucine 134 contributes to the Ca(2+) binding site. N-linked (GlcNAc...) asparagine glycosylation is present at asparagine 151. Histidine 194 is a binding site for Zn(2+). N-linked (GlcNAc...) asparagine glycosylation occurs at asparagine 217. Histidine 303 provides a ligand contact to Zn(2+). Residue asparagine 308 is glycosylated (N-linked (GlcNAc...) asparagine). Serine 354 serves as the catalytic Nucleophile. Intrachain disulfides connect cysteine 362–cysteine 376 and cysteine 369–cysteine 384. 2 N-linked (GlcNAc...) asparagine glycosylation sites follow: asparagine 440 and asparagine 468. Cysteine 448 and cysteine 498 form a disulfide bridge. Residue glutamate 540 participates in Zn(2+) binding. A glycan (N-linked (GlcNAc...) asparagine) is linked at asparagine 564. Tyrosine 579 contributes to the Zn(2+) binding site. Aspartate 712, serine 714, and threonine 717 together coordinate Ca(2+). N-linked (GlcNAc...) asparagine glycosylation occurs at asparagine 730. The interval glycine 770–isoleucine 780 is required for correct folding and localization. Threonine 779 carries an O-linked (GalNAc...) threonine glycan.

This sequence belongs to the neutral ceramidase family. Zn(2+) is required as a cofactor. Post-translationally, proteolytic cleavage of the N-terminus removes the signal-anchor and produces a soluble form of the protein. N-glycosylated. Required for enzyme activity. In terms of processing, O-glycosylated. Required to retain it as a type II membrane protein at the cell surface. Post-translationally, phosphorylated. May prevent ubiquitination and subsequent degradation. Ubiquitinated, leading to its degradation by the proteasome. Ubiquitination is triggered by nitric oxide. As to expression, primarily expressed in intestine. Ubiquitously expressed with higher levels in kidney, skeletal muscle and heart. The ubiquitous expression observed for ASAH2 might be an experimental artifact due to the paralog ASAH2B.

The protein resides in the cell membrane. Its subcellular location is the membrane raft. The protein localises to the membrane. It localises to the caveola. It is found in the golgi apparatus membrane. The protein resides in the mitochondrion. Its subcellular location is the secreted. The protein localises to the extracellular exosome. It catalyses the reaction an N-acylsphing-4-enine + H2O = sphing-4-enine + a fatty acid. It carries out the reaction N-dodecanoylsphing-4-enine + H2O = dodecanoate + sphing-4-enine. The catalysed reaction is N-hexadecanoylsphing-4-enine + H2O = sphing-4-enine + hexadecanoate. The enzyme catalyses N-octanoylsphing-4-enine + H2O = octanoate + sphing-4-enine. It catalyses the reaction N-(hexanoyl)sphing-4-enine + H2O = hexanoate + sphing-4-enine. It carries out the reaction N-octadecanoylsphing-4-enine + H2O = sphing-4-enine + octadecanoate. The catalysed reaction is N-tetradecanoylsphing-4-enine + H2O = tetradecanoate + sphing-4-enine. The enzyme catalyses N-(9Z-octadecenoyl)-sphing-4-enine + H2O = sphing-4-enine + (9Z)-octadecenoate. It catalyses the reaction N-(15Z-tetracosenoyl)-sphing-4-enine + H2O = (15Z)-tetracosenoate + sphing-4-enine. It carries out the reaction sphinganine + hexadecanoate = N-hexadecanoylsphinganine + H2O. The catalysed reaction is N-(octadecanoyl)-sphinganine + H2O = sphinganine + octadecanoate. Its pathway is lipid metabolism; sphingolipid metabolism. Its activity is regulated as follows. Inhibited by dithiothreitol (DTT) and 2-mercaptoethanol. Activity is mildly stimulated by Ca(2+) and Mg(2+), but is not inhibited by EDTA. Activity is inhibited by millimolar levels of Fe(2+), Zn(2+) and Cu(2+). Inhibited by cholesterol. Plasma membrane ceramidase that hydrolyzes sphingolipid ceramides into sphingosine and free fatty acids at neutral pH. Ceramides, sphingosine, and its phosphorylated form sphingosine-1-phosphate are bioactive lipids that mediate cellular signaling pathways regulating several biological processes including cell proliferation, apoptosis and differentiation. Also catalyzes the reverse reaction allowing the synthesis of ceramides from fatty acids and sphingosine. Together with sphingomyelinase, participates in the production of sphingosine and sphingosine-1-phosphate from the degradation of sphingomyelin, a sphingolipid enriched in the plasma membrane of cells. Also participates in the hydrolysis of ceramides from the extracellular milieu allowing the production of sphingosine-1-phosphate inside and outside cells. This is the case for instance with the digestion of dietary sphingolipids in the intestinal tract. This is Neutral ceramidase (ASAH2) from Homo sapiens (Human).